Reading from the N-terminus, the 92-residue chain is Small ribosomal subunit protein uS19c (92 aa).

Belongs to the universal ribosomal protein uS19 family.

Its subcellular location is the plastid. It is found in the chloroplast. In terms of biological role, protein S19 forms a complex with S13 that binds strongly to the 16S ribosomal RNA. The protein is Small ribosomal subunit protein uS19c of Pinus koraiensis (Korean pine).